A 346-amino-acid chain; its full sequence is MRALGAVVTLLLWGQLFAVDLSNDAMDTADDSCPKPPEIENGYVEHLVRYRCQHYRLRTEGDGVYTLNSEKQWVNTAAGERLPECEAVCGKPKHPVDQVQRIIGGSLDAKGSFPWQAKMVSRHELITGATLISDQWLLTTAKNLFLNHSEDATSKDIAPTLKLYVGKMQPVEIEKVVIHPNRSVVDIGVIKLRQKVPVNERVMPICLPSKDYIAPGRMGYVSGWGRNANFRFTDRLKYVMLPVADQDSCMLHYEGSTVPEKEGSKSSVGVQPILNEHTFCAGMTKYQEDTCYGDAGSAFAIHDLEQDTWYAAGILSFDKSCSVAEYGVYVKVNSFLDWIQETMAKN.

Positions 1-18 are cleaved as a signal peptide; that stretch reads MRALGAVVTLLLWGQLFA. One can recognise a Sushi domain in the interval 31–87; it reads DSCPKPPEIENGYVEHLVRYRCQHYRLRTEGDGVYTLNSEKQWVNTAAGERLPECEA. 4 cysteine pairs are disulfide-bonded: Cys52–Cys85, Cys89–Cys206, Cys249–Cys280, and Cys291–Cys321. One can recognise a Peptidase S1 domain in the interval 102–344; that stretch reads IIGGSLDAKG…FLDWIQETMA (243 aa). N-linked (GlcNAc...) asparagine glycans are attached at residues Asn147 and Asn181. The tract at residues 258 to 263 is interaction with CD163; the sequence is VPEKEG.

The protein belongs to the peptidase S1 family. In terms of assembly, tetramer of two alpha and two beta chains; disulfide-linked. The hemoglobin/haptoglobin complex is composed of a haptoglobin dimer bound to two hemoglobin alpha-beta dimers. Interacts with CD163. Interacts with ERGIC3. In terms of tissue distribution, expressed by the liver and secreted in plasma.

It localises to the secreted. Its function is as follows. As a result of hemolysis, hemoglobin is found to accumulate in the kidney and is secreted in the urine. Haptoglobin captures, and combines with free plasma hemoglobin to allow hepatic recycling of heme iron and to prevent kidney damage. Haptoglobin also acts as an antioxidant, has antibacterial activity and plays a role in modulating many aspects of the acute phase response. Hemoglobin/haptoglobin complexes are rapidly cleared by the macrophage CD163 scavenger receptor expressed on the surface of liver Kupfer cells through an endocytic lysosomal degradation pathway. This chain is Haptoglobin (HP), found in Mesocricetus auratus (Golden hamster).